A 285-amino-acid chain; its full sequence is Hydroxyacylglutathione hydrolase, mitochondrial (285 aa).

The N-terminal 10 residues, 1–10 (MKFLLQQIRN), are a transit peptide targeting the mitochondrion. Positions 69, 71, 73, 74, 131, 154, and 198 each coordinate Zn(2+).

The cofactor is Zn(2+).

The protein resides in the mitochondrion matrix. It carries out the reaction an S-(2-hydroxyacyl)glutathione + H2O = a 2-hydroxy carboxylate + glutathione + H(+). The enzyme catalyses (R)-S-lactoylglutathione + H2O = (R)-lactate + glutathione + H(+). The protein operates within secondary metabolite metabolism; methylglyoxal degradation; (R)-lactate from methylglyoxal: step 2/2. With respect to regulation, inhibited by various thiol compounds such as glutathione and coenzyme A. Thiolesterase that catalyzes the hydrolysis of S-D-lactoylglutathione to form glutathione and D-lactic acid. Involved in the metabolism of methylglyoxal, a toxic compound for yeast proliferation, by converting methylglyoxal to lactate via S-D-lactoylglutathione by sequential enzyme reactions catalyzed by glyoxalase I and glyoxalase II. The sequence is that of Hydroxyacylglutathione hydrolase, mitochondrial from Saccharomyces cerevisiae (strain ATCC 204508 / S288c) (Baker's yeast).